We begin with the raw amino-acid sequence, 164 residues long: Ubiquitin-fold modifier-conjugating enzyme 1 (164 aa).

Cys116 serves as the catalytic Glycyl thioester intermediate.

It belongs to the ubiquitin-conjugating enzyme family. UFC1 subfamily.

Its function is as follows. E2-like enzyme which forms an intermediate with UFM1 via a thioester linkage. This Drosophila willistoni (Fruit fly) protein is Ubiquitin-fold modifier-conjugating enzyme 1.